An 89-amino-acid polypeptide reads, in one-letter code: uncharacterized protein (89 aa).

A signal peptide spans 1-19 (MQLTKTQFVRCVFLLLANS).

This is an uncharacterized protein from Sulfolobus islandicus filamentous virus (isolate Iceland/Hveragerdi) (SIFV).